The following is a 266-amino-acid chain: Apoptosis regulator ced-9 (266 aa).

Residues 1–58 form a disordered region; sequence MVDSMDMANSSQNTFRRRTMATSEMREFLSTKDAEPNNFGMQTIPESPTPSTPTRRMS. Over residues 24–35 the composition is skewed to basic and acidic residues; it reads EMREFLSTKDAE. The short motif at 75-94 is the BH4 element; sequence IQGFVVDYFTYRIAQNGLDW. The short motif at 156–174 is the BH1 element; that stretch reads NTPCPMSYGRLIGLISFGG. The BH2 signature appears at 208 to 223; it reads SWKEHNRSWADFMKLG.

Belongs to the Bcl-2 family. In terms of assembly, interacts with asymmetric homodimer ced-4; the interaction sequesters ced-4. Interacts with egl-1; the interaction results in ced-4 release. Interacts with dre-1; the interaction inhibits ced-9 activity, either directly or indirectly. Interacts with dct-1. May form a complex composed of ced-9, ced-4 and mac-1.

It localises to the perikaryon. The protein resides in the synapse. It is found in the endomembrane system. Its subcellular location is the mitochondrion membrane. Its function is as follows. Plays a major role in programmed cell death (PCD, apoptosis). egl-1 binds to and directly inhibits the activity of ced-9, releasing the cell death activator ced-4 from a ced-9/ced-4 containing protein complex and allowing ced-4 to activate the cell-killing caspase ced-3. During larval development, required for the elimination of transient presynaptic components downstream of egl-1 and upstream of ced-4 and ced-3 apoptotic pathway. The chain is Apoptosis regulator ced-9 (ced-9) from Caenorhabditis briggsae.